The sequence spans 177 residues: Small ribosomal subunit protein uS5 (177 aa).

Residues 14 to 77 (LQEKLITVNR…EKARHNMIDI (64 aa)) form the S5 DRBM domain.

Belongs to the universal ribosomal protein uS5 family. In terms of assembly, part of the 30S ribosomal subunit. Contacts proteins S4 and S8.

In terms of biological role, with S4 and S12 plays an important role in translational accuracy. Functionally, located at the back of the 30S subunit body where it stabilizes the conformation of the head with respect to the body. The polypeptide is Small ribosomal subunit protein uS5 (Blochmanniella floridana).